Reading from the N-terminus, the 135-residue chain is Large ribosomal subunit protein uL18 (135 aa).

The segment at 1 to 23 (MAQTQADTAARKPVGQSVSATRR) is disordered.

The protein belongs to the universal ribosomal protein uL18 family. In terms of assembly, part of the 50S ribosomal subunit; part of the 5S rRNA/L5/L18/L25 subcomplex. Contacts the 5S and 23S rRNAs.

Its function is as follows. This is one of the proteins that bind and probably mediate the attachment of the 5S RNA into the large ribosomal subunit, where it forms part of the central protuberance. In Mycobacterium marinum (strain ATCC BAA-535 / M), this protein is Large ribosomal subunit protein uL18.